The primary structure comprises 92 residues: Small ribosomal subunit protein uS19c (92 aa).

Belongs to the universal ribosomal protein uS19 family.

It localises to the plastid. Its subcellular location is the chloroplast. Protein S19 forms a complex with S13 that binds strongly to the 16S ribosomal RNA. This is Small ribosomal subunit protein uS19c from Nasturtium officinale (Watercress).